Consider the following 133-residue polypeptide: Profilin Sal k 4.0101 (133 aa).

Cysteine 95 and cysteine 117 are oxidised to a cystine.

The protein belongs to the profilin family. Occurs in many kinds of cells as a complex with monomeric actin in a 1:1 ratio. Expressed in pollen.

It localises to the cytoplasm. The protein resides in the cytoskeleton. In terms of biological role, binds to actin and affects the structure of the cytoskeleton. At high concentrations, profilin prevents the polymerization of actin, whereas it enhances it at low concentrations. The protein is Profilin Sal k 4.0101 of Kali turgidum (Prickly saltwort).